The following is a 256-amino-acid chain: 5-keto-4-deoxy-D-glucarate aldolase (256 aa).

Residue His-50 is the Proton acceptor of the active site. Gln-151 contacts substrate. Residue Glu-153 coordinates Mg(2+). Residues Ser-178 and Asp-179 each coordinate substrate. Asp-179 contributes to the Mg(2+) binding site.

Belongs to the HpcH/HpaI aldolase family. KDGluc aldolase subfamily. As to quaternary structure, homohexamer; trimer of dimers. Mg(2+) serves as cofactor.

The catalysed reaction is 5-dehydro-4-deoxy-D-glucarate = 2-hydroxy-3-oxopropanoate + pyruvate. It catalyses the reaction 2-dehydro-3-deoxy-D-glucarate = 2-hydroxy-3-oxopropanoate + pyruvate. It functions in the pathway carbohydrate acid metabolism; galactarate degradation; D-glycerate from galactarate: step 2/3. Its function is as follows. Catalyzes the reversible retro-aldol cleavage of both 5-keto-4-deoxy-D-glucarate and 2-keto-3-deoxy-D-glucarate to pyruvate and tartronic semialdehyde. The sequence is that of 5-keto-4-deoxy-D-glucarate aldolase from Shigella dysenteriae serotype 1 (strain Sd197).